A 245-amino-acid polypeptide reads, in one-letter code: Acetylglutamate kinase (245 aa).

Substrate-binding positions include 41 to 42 (GG), Arg-63, and Asn-156.

The protein belongs to the acetylglutamate kinase family. ArgB subfamily.

Its subcellular location is the cytoplasm. The catalysed reaction is N-acetyl-L-glutamate + ATP = N-acetyl-L-glutamyl 5-phosphate + ADP. It functions in the pathway amino-acid biosynthesis; L-arginine biosynthesis; N(2)-acetyl-L-ornithine from L-glutamate: step 2/4. Its function is as follows. Catalyzes the ATP-dependent phosphorylation of N-acetyl-L-glutamate. The chain is Acetylglutamate kinase from Streptococcus gordonii (strain Challis / ATCC 35105 / BCRC 15272 / CH1 / DL1 / V288).